The primary structure comprises 250 residues: L-ascorbate peroxidase, cytosolic (250 aa).

Histidine 42 acts as the Proton acceptor in catalysis. Residues 113–137 (VPFHPGREDKPEPPPEGRLPDATKG) form a disordered region. Basic and acidic residues predominate over residues 117–137 (PGREDKPEPPPEGRLPDATKG). A heme b-binding site is contributed by histidine 163. Residues threonine 164, threonine 180, asparagine 182, isoleucine 185, and aspartate 187 each coordinate K(+).

This sequence belongs to the peroxidase family. Ascorbate peroxidase subfamily. Heme b serves as cofactor.

It localises to the cytoplasm. The enzyme catalyses L-ascorbate + H2O2 = L-dehydroascorbate + 2 H2O. Functionally, plays a key role in hydrogen peroxide removal. The chain is L-ascorbate peroxidase, cytosolic (APX1) from Pisum sativum (Garden pea).